An 836-amino-acid polypeptide reads, in one-letter code: Protein O-mannosyl-transferase TMTC2 (836 aa).

The helical transmembrane segment at Met-1–Ala-21 threads the bilayer. The Extracellular segment spans residues Asp-22–Pro-84. The helical transmembrane segment at Trp-85–Phe-105 threads the bilayer. Residues Ser-106–Lys-107 are Cytoplasmic-facing. The chain crosses the membrane as a helical span at residues Ile-108 to Ile-128. The Extracellular portion of the chain corresponds to His-129–Ala-132. The chain crosses the membrane as a helical span at residues Val-133–Leu-153. Residues Cys-154 to Arg-162 are Cytoplasmic-facing. Transmembrane regions (helical) follow at residues Gly-163–Leu-184 and Trp-185–Phe-204. Topologically, residues His-205–Lys-220 are cytoplasmic. The chain crosses the membrane as a helical span at residues Asn-221 to Ala-241. Over Arg-242 to His-312 the chain is Extracellular. A helical membrane pass occupies residues Thr-313 to Val-333. Topologically, residues Asp-334–Ser-399 are cytoplasmic. A helical membrane pass occupies residues Leu-400 to Ala-420. At Glu-421–Arg-422 the chain is on the extracellular side. A helical transmembrane segment spans residues Val-423–Tyr-443. The Cytoplasmic portion of the chain corresponds to Val-444–Arg-449. Residues Phe-450–Thr-470 form a helical membrane-spanning segment. Residues Ala-471 to Thr-836 are Extracellular-facing. 9 TPR repeats span residues Ala-493–Met-526, Ala-527–Leu-560, Ala-561–Asn-594, Thr-606–Gln-639, Gln-643–His-676, Ile-677–Lys-710, Gly-711–Glu-744, Phe-745–Tyr-778, and Pro-779–Asp-812.

This sequence belongs to the TMTC family.

The protein resides in the membrane. It localises to the endoplasmic reticulum. The enzyme catalyses a di-trans,poly-cis-dolichyl beta-D-mannosyl phosphate + L-seryl-[protein] = 3-O-(alpha-D-mannosyl)-L-seryl-[protein] + a di-trans,poly-cis-dolichyl phosphate + H(+). It carries out the reaction a di-trans,poly-cis-dolichyl beta-D-mannosyl phosphate + L-threonyl-[protein] = 3-O-(alpha-D-mannosyl)-L-threonyl-[protein] + a di-trans,poly-cis-dolichyl phosphate + H(+). It participates in protein modification; protein glycosylation. Transfers mannosyl residues to the hydroxyl group of serine or threonine residues. The 4 members of the TMTC family are O-mannosyl-transferases dedicated primarily to the cadherin superfamily, each member seems to have a distinct role in decorating the cadherin domains with O-linked mannose glycans at specific regions. Also acts as O-mannosyl-transferase on other proteins such as PDIA3. This Homo sapiens (Human) protein is Protein O-mannosyl-transferase TMTC2.